The primary structure comprises 458 residues: BUD13 homolog (458 aa).

Disordered regions lie at residues 16-37 (SGDI…SGLR), 81-328 (KQTF…TEEL), and 437-458 (AKTE…AEYE). Positions 138–148 (NRHDSDKDNSP) are enriched in basic and acidic residues. Basic residues-rich tracts occupy residues 175-185 (RNRRSPPRTRR) and 208-218 (PRRRPSSPARR). 3 stretches are compositionally biased toward basic and acidic residues: residues 219 to 243 (RKDD…KKEE), 266 to 284 (RDLK…KMFE), and 314 to 328 (DQAK…TEEL). Residues 262–356 (LQSARDLKEE…AQLEEMARVA (95 aa)) are a coiled coil.

The protein belongs to the CWC26 family.

This is BUD13 homolog from Caenorhabditis elegans.